A 258-amino-acid chain; its full sequence is Regulatory protein RecX (258 aa).

It belongs to the RecX family.

It is found in the cytoplasm. Functionally, modulates RecA activity. The protein is Regulatory protein RecX of Streptococcus equi subsp. equi (strain 4047).